We begin with the raw amino-acid sequence, 492 residues long: Protein nucleotidyltransferase YdiU (492 aa).

Residues G101, G103, R104, K124, D136, G137, R187, and R194 each coordinate ATP. Catalysis depends on D268, which acts as the Proton acceptor. Positions 269 and 278 each coordinate Mg(2+). D278 contacts ATP.

This sequence belongs to the SELO family. Requires Mg(2+) as cofactor. Mn(2+) serves as cofactor.

It carries out the reaction L-seryl-[protein] + ATP = 3-O-(5'-adenylyl)-L-seryl-[protein] + diphosphate. The enzyme catalyses L-threonyl-[protein] + ATP = 3-O-(5'-adenylyl)-L-threonyl-[protein] + diphosphate. It catalyses the reaction L-tyrosyl-[protein] + ATP = O-(5'-adenylyl)-L-tyrosyl-[protein] + diphosphate. The catalysed reaction is L-histidyl-[protein] + UTP = N(tele)-(5'-uridylyl)-L-histidyl-[protein] + diphosphate. It carries out the reaction L-seryl-[protein] + UTP = O-(5'-uridylyl)-L-seryl-[protein] + diphosphate. The enzyme catalyses L-tyrosyl-[protein] + UTP = O-(5'-uridylyl)-L-tyrosyl-[protein] + diphosphate. Nucleotidyltransferase involved in the post-translational modification of proteins. It can catalyze the addition of adenosine monophosphate (AMP) or uridine monophosphate (UMP) to a protein, resulting in modifications known as AMPylation and UMPylation. The protein is Protein nucleotidyltransferase YdiU of Corynebacterium efficiens (strain DSM 44549 / YS-314 / AJ 12310 / JCM 11189 / NBRC 100395).